Reading from the N-terminus, the 279-residue chain is Stathmin domain-containing protein 1 (279 aa).

Disordered stretches follow at residues Met-1 to Lys-110 and Ala-178 to Met-254. Gly-2 carries the N-myristoyl glycine lipid modification. Basic and acidic residues predominate over residues Lys-22 to Val-32. The span at Val-34–Thr-45 shows a compositional bias: polar residues. The 128-residue stretch at Gln-121 to Glu-248 folds into the SLD domain. 2 stretches are compositionally biased toward basic and acidic residues: residues Ala-178–Arg-191 and Glu-232–Leu-242.

In Mus musculus (Mouse), this protein is Stathmin domain-containing protein 1 (Stmnd1).